The chain runs to 249 residues: Gamma-glutamyl peptidase 3 (249 aa).

In terms of domain architecture, Glutamine amidotransferase type-1 spans 19-217; it reads SEFVKKTYGG…VDRVLNMKLM (199 aa). Cys103 (nucleophile) is an active-site residue. Catalysis depends on residues His196 and Glu198.

The protein belongs to the peptidase C26 family.

It localises to the cytoplasm. The protein resides in the cytosol. It catalyses the reaction an S-[(1E)-1-(hydroxyimino)-omega-(methylsulfanyl)alkyl]-L-glutathione + H2O = an S-[(1E)-1-(hydroxyimino)-omega-(methylsulfanyl)alkyl]-L-cysteinylglycine + L-glutamate. The enzyme catalyses (E)-1-(glutathione-S-yl)-2-(1H-indol-3-yl)acetohydroximate + H2O = (E)-1-(glycyl-L-cystein-S-yl)-2-(1H-indol-3-yl)acetohydroximate + L-glutamate. The catalysed reaction is 2-(glutathion-S-yl)-2-(1H-indol-3-yl)acetonitrile + H2O = 2-(glycyl-L-cystein-S-yl)-2-(1H-indol-3-yl)acetonitrile + L-glutamate. It carries out the reaction (Z)-1-(glutathione-S-yl)-2-phenylacetohydroximate + H2O = (Z)-1-(glycyl-L-cystein-S-yl)-2-phenylacetohydroximate + L-glutamate. It functions in the pathway secondary metabolite biosynthesis. Involved in glucosinolate biosynthesis. Hydrolyzes the gamma-glutamyl peptide bond of several glutathione (GSH) conjugates to produce Cys-Gly conjugates related to glucosinolates. The gamma-Glu-Cys-Gly-GSH conjugates are the sulfur-donating molecule in glucosinolate biosynthesis. Can use the GSH conjugate of the camalexin intermediate IAN (GS-IAN) as substrate. Required for the biosynthesis of camalexin, a pathogen-inducible phytoalexin with antibacterial and antifungal properties. The protein is Gamma-glutamyl peptidase 3 of Arabidopsis thaliana (Mouse-ear cress).